A 360-amino-acid chain; its full sequence is Peptide chain release factor 1 (360 aa).

Glutamine 234 is modified (N5-methylglutamine). Residues 285–305 (RAQGIAEDRKSQVGTGDRSER) form a disordered region.

This sequence belongs to the prokaryotic/mitochondrial release factor family. In terms of processing, methylated by PrmC. Methylation increases the termination efficiency of RF1.

Its subcellular location is the cytoplasm. Peptide chain release factor 1 directs the termination of translation in response to the peptide chain termination codons UAG and UAA. In Clostridium beijerinckii (strain ATCC 51743 / NCIMB 8052) (Clostridium acetobutylicum), this protein is Peptide chain release factor 1.